The sequence spans 72 residues: Large ribosomal subunit protein uL29 (72 aa).

This sequence belongs to the universal ribosomal protein uL29 family.

The chain is Large ribosomal subunit protein uL29 from Thermodesulfovibrio yellowstonii (strain ATCC 51303 / DSM 11347 / YP87).